We begin with the raw amino-acid sequence, 197 residues long: RNA-binding protein with multiple splicing (197 aa).

Met1 bears the N-acetylmethionine mark. Thr12 bears the Phosphothreonine mark. Positions 24–101 constitute an RRM domain; that stretch reads RTLFVSGLPL…QTLRLEFAKA (78 aa). The segment at 98-105 is interaction with RNA; the sequence is FAKANTKM. Thr113 is subject to Phosphothreonine.

Homodimer; each protein chain binds one RNA molecule via the external surface of the homodimer. Interacts with RNA binding proteins MBNL1, RBFOX2, RBM4 and RBM14; the interaction allows cooperative assembly of stable cell-specific alternative splicing regulatory complexes. Also interacts with RBM47, MATR3 and ESRP2. Interacts with SMAD2, SMAD3 and SMAD4; the interactions are direct. MRNA expressed in developing heart, with significantly higher expression in the atria relative to the ventricles.

Its subcellular location is the nucleus. The protein resides in the cytoplasm. It is found in the stress granule. The protein localises to the P-body. Its function is as follows. RNA binding protein that mediates the regulation of pre-mRNA alternative splicing (AS). Acts either as activator (FLNB, HSPG2, LIPA1, MYOCD, PTPRF and PPFIBP1) or repressor (TPM1, ACTN1, ITGA7, PIEZO1, LSM14B, MBNL1 and MBML2) of splicing events on specific pre-mRNA targets. Together with RNA binding proteins RBFOX2 and MBNL1/2, activates a splicing program associated with differentiated contractile vascular smooth muscle cells (SMC) by regulating AS of numerous pre-mRNA involved in actin cytoskeleton and focal adhesion machineries, suggesting a role in promoting a cell differentiated state. Binds to introns, exons and 3'-UTR associated with tandem CAC trinucleotide motifs separated by a variable spacer region, at a minimum as a dimer. The minimal length of RNA required for RBPMS-binding tandem CAC motifs is 15 nt, with spacing ranging from 1 to 9 nt. Can also bind to CA dinucleotide repeats. Mediates repression of TPM1 exon 3 by binding to CAC tandem repeats in the flanking intronic regions, followed by higher-order oligomerization and heterotypic interactions with other splicing regulators including MBNL1 and RBFOX2, which prevents assembly of ATP-dependent splicing complexes. This chain is RNA-binding protein with multiple splicing, found in Mus musculus (Mouse).